Here is a 451-residue protein sequence, read N- to C-terminus: UPF0210 protein lmo0534 (451 aa).

The protein belongs to the UPF0210 family. As to quaternary structure, homodimer.

The chain is UPF0210 protein lmo0534 from Listeria monocytogenes serovar 1/2a (strain ATCC BAA-679 / EGD-e).